A 321-amino-acid chain; its full sequence is Ferredoxin--NADP reductase (321 aa).

The FAD site is built by D28, Q36, Y41, A81, F115, D274, and S315.

This sequence belongs to the ferredoxin--NADP reductase type 2 family. As to quaternary structure, homodimer. FAD is required as a cofactor.

The enzyme catalyses 2 reduced [2Fe-2S]-[ferredoxin] + NADP(+) + H(+) = 2 oxidized [2Fe-2S]-[ferredoxin] + NADPH. This chain is Ferredoxin--NADP reductase, found in Frankia alni (strain DSM 45986 / CECT 9034 / ACN14a).